The primary structure comprises 375 residues: Growth/differentiation factor 8 (375 aa).

An N-terminal signal peptide occupies residues Met1–Ala18. Positions Gly19–Arg266 are excised as a propeptide. Asn47 and Asn71 each carry an N-linked (GlcNAc...) asparagine glycan. Intrachain disulfides connect Cys272–Cys282, Cys281–Cys340, Cys309–Cys372, and Cys313–Cys374.

This sequence belongs to the TGF-beta family. As to quaternary structure, homodimer; disulfide-linked. Interacts with WFIKKN2, leading to inhibit its activity. Interacts with FSTL3. Post-translationally, synthesized as large precursor molecule that undergoes proteolytic cleavage to generate an N-terminal propeptide and a disulfide linked C-terminal dimer, which is the biologically active molecule. The circulating form consists of a latent complex of the C-terminal dimer and other proteins, including its propeptide, which maintain the C-terminal dimer in a latent, inactive state. Ligand activation requires additional cleavage of the prodomain by a tolloid-like metalloproteinase.

It is found in the secreted. Acts specifically as a negative regulator of skeletal muscle growth. This is Growth/differentiation factor 8 (MSTN) from Taurotragus derbianus (Giant eland).